The primary structure comprises 363 residues: GDSL esterase/lipase At2g24560 (363 aa).

Positions 1 to 22 (MSTSKTITFTLFIAALLSSCDA) are cleaved as a signal peptide. An N-linked (GlcNAc...) asparagine glycan is attached at Asn25. The active-site Nucleophile is the Ser41. Residues Asn103 and Asn325 are each glycosylated (N-linked (GlcNAc...) asparagine). Active-site residues include Asp333 and His336.

It belongs to the 'GDSL' lipolytic enzyme family.

It localises to the secreted. The polypeptide is GDSL esterase/lipase At2g24560 (Arabidopsis thaliana (Mouse-ear cress)).